A 631-amino-acid chain; its full sequence is Probable basic-leucine zipper transcription factor F (631 aa).

A coiled-coil region spans residues 35-62; sequence KKNANVFNNFQQQQQQIQQQNKQSNGLI. Disordered stretches follow at residues 46–117, 154–207, and 264–406; these read QQQQ…HNNI, LNNS…NNQF, and MLNV…ERHQ. 2 stretches are compositionally biased toward low complexity: residues 155-206 and 271-360; these read NNSY…NNNQ and NNAN…GSNN. Residues 328-366 are a coiled coil; the sequence is NNNNNNSNNISTQINNLNNNINNQNNQLNGSNNGKKKEE. Residues 405 to 468 enclose the bZIP domain; sequence HQKRQRRLVK…KLIREQLLYL (64 aa). Residues 407-427 are basic motif; it reads KRQRRLVKNREAAQLFRQRQK. Positions 433–440 are leucine-zipper; the sequence is LEKKVSDL. A disordered region spans residues 546 to 631; the sequence is QGNLLGTPIP…PPQQSTPNQR (86 aa). Composition is skewed to low complexity over residues 563 to 609 and 618 to 631; these read SNSG…PNSS and PQNT…PNQR.

Belongs to the bZIP family.

It is found in the nucleus. In terms of biological role, probable transcriptional regulator. In Dictyostelium discoideum (Social amoeba), this protein is Probable basic-leucine zipper transcription factor F (bzpF).